We begin with the raw amino-acid sequence, 112 residues long: MRCKTLTAAAAVLLMLTAGCSTLERVVYRPDINQGNYLTPTDVAKVRVGMTQQQVAYALGTPMMTDPFGTNTWFYVFRQQPGHENVTQQTLTLTFNSSGVLTNIDNKPALTK.

Residues methionine 1–glycine 19 form the signal peptide. A lipid anchor (N-palmitoyl cysteine) is attached at cysteine 20. Residue cysteine 20 is the site of S-diacylglycerol cysteine attachment.

Belongs to the BamE family. Part of the Bam complex, which is composed of the outer membrane protein BamA, and four lipoproteins BamB, BamC, BamD and BamE.

Its subcellular location is the cell outer membrane. In terms of biological role, part of the outer membrane protein assembly complex, which is involved in assembly and insertion of beta-barrel proteins into the outer membrane. The sequence is that of Outer membrane protein assembly factor BamE from Salmonella typhimurium (strain LT2 / SGSC1412 / ATCC 700720).